A 227-amino-acid chain; its full sequence is uncharacterized protein (227 aa).

It is found in the virion. This is an uncharacterized protein from Acanthamoeba polyphaga (Amoeba).